Reading from the N-terminus, the 796-residue chain is Fibroblast growth factor receptor 3 (796 aa).

An N-terminal signal peptide occupies residues 1–19 (MLVWLCGLCLVTLAGGRSA). Over 20–358 (ARLPLTEGRP…AEPVPDVDTS (339 aa)) the chain is Extracellular. In terms of domain architecture, Ig-like C2-type 1 spans 21-119 (RLPLTEGRPT…VLRNVTVRVT (99 aa)). An intrachain disulfide couples cysteine 56 to cysteine 102. N-linked (GlcNAc...) asparagine glycans are attached at residues asparagine 91 and asparagine 113. The disordered stretch occupies residues 117-142 (RVTDSPSSGDDEDDDEESESANAPKF). Acidic residues predominate over residues 125-135 (GDDEDDDEESE). Ig-like C2-type domains lie at 140 to 233 (PKFT…YTLD) and 239 to 344 (PHRP…AWLT). The cysteines at positions 165 and 217 are disulfide-linked. Asparagine 214, asparagine 251, asparagine 283, asparagine 304, and asparagine 317 each carry an N-linked (GlcNAc...) asparagine glycan. A disulfide bridge links cysteine 264 with cysteine 328. A helical transmembrane segment spans residues 359–379 (VSILAAAGCVAVVILVVIIIF). Over 380 to 796 (TYKMKMPSKK…HQQYNGVIRT (417 aa)) the chain is Cytoplasmic. In terms of domain architecture, Protein kinase spans 457–746 (LTLGKPLGEG…LTVTSTDEYL (290 aa)). ATP is bound by residues 463 to 471 (LGEGCFGQV) and lysine 493. Aspartate 602 (proton acceptor) is an active-site residue. Phosphotyrosine; by autocatalysis occurs at positions 632, 633, 709, and 745.

Belongs to the protein kinase superfamily. Tyr protein kinase family. Fibroblast growth factor receptor subfamily. Monomer. Homodimer after ligand binding. Post-translationally, autophosphorylated. Binding of FGF family members together with heparan sulfate proteoglycan or heparin promotes receptor dimerization and autophosphorylation on tyrosine residues. Autophosphorylation occurs in trans between the two FGFR molecules present in the dimer. Undetectable in the adult skeletal muscle. Low levels of expression were detected in the liver, lung and kidney. Medium levels of expression were detected in the heart, spleen, intestine and eye. Highest expression is observed in the testis.

The protein resides in the cell membrane. The catalysed reaction is L-tyrosyl-[protein] + ATP = O-phospho-L-tyrosyl-[protein] + ADP + H(+). Its activity is regulated as follows. Present in an inactive conformation in the absence of bound ligand. Ligand binding leads to dimerization and activation by autophosphorylation on tyrosine residues. In terms of biological role, tyrosine-protein kinase that acts as a cell-surface receptor for fibroblast growth factors and plays an essential role in the regulation of cell proliferation, differentiation and apoptosis. Plays an essential role in the regulation of chondrocyte differentiation, proliferation and apoptosis, and is required for normal skeleton development. Regulates both osteogenesis and postnatal bone mineralization by osteoblasts. Promotes apoptosis in chondrocytes, but can also promote cancer cell proliferation. Phosphorylates PLCG1, CBL and FRS2. Ligand binding leads to the activation of several signaling cascades. Activation of PLCG1 leads to the production of the cellular signaling molecules diacylglycerol and inositol 1,4,5-trisphosphate. Phosphorylation of FRS2 triggers recruitment of GRB2, GAB1, PIK3R1 and SOS1, and mediates activation of RAS, MAPK1/ERK2, MAPK3/ERK1 and the MAP kinase signaling pathway, as well as of the AKT1 signaling pathway. This is Fibroblast growth factor receptor 3 (FGFR3) from Pleurodeles waltl (Iberian ribbed newt).